Reading from the N-terminus, the 270-residue chain is Orotidine 5'-phosphate decarboxylase (270 aa).

Residues D39, 61–63 (KTH), 93–102 (DRKFADIGNT), Y221, and R239 contribute to the substrate site. The active-site Proton donor is K95.

This sequence belongs to the OMP decarboxylase family.

The catalysed reaction is orotidine 5'-phosphate + H(+) = UMP + CO2. It functions in the pathway pyrimidine metabolism; UMP biosynthesis via de novo pathway; UMP from orotate: step 2/2. The polypeptide is Orotidine 5'-phosphate decarboxylase (URA3) (Candida albicans (strain SC5314 / ATCC MYA-2876) (Yeast)).